Consider the following 340-residue polypeptide: Ketol-acid reductoisomerase (NADP(+)) (340 aa).

The region spanning Met-1 to Thr-182 is the KARI N-terminal Rossmann domain. Residues Tyr-24–Gln-27, Arg-48, Ser-51, Ser-53, and Asp-83–Gln-86 each bind NADP(+). His-108 is an active-site residue. Gly-134 is an NADP(+) binding site. Positions Asn-183–Ile-329 constitute a KARI C-terminal knotted domain. Residues Asp-191, Glu-195, Glu-227, and Glu-231 each coordinate Mg(2+). Residue Ser-252 coordinates substrate.

It belongs to the ketol-acid reductoisomerase family. Mg(2+) is required as a cofactor.

It carries out the reaction (2R)-2,3-dihydroxy-3-methylbutanoate + NADP(+) = (2S)-2-acetolactate + NADPH + H(+). The enzyme catalyses (2R,3R)-2,3-dihydroxy-3-methylpentanoate + NADP(+) = (S)-2-ethyl-2-hydroxy-3-oxobutanoate + NADPH + H(+). It functions in the pathway amino-acid biosynthesis; L-isoleucine biosynthesis; L-isoleucine from 2-oxobutanoate: step 2/4. Its pathway is amino-acid biosynthesis; L-valine biosynthesis; L-valine from pyruvate: step 2/4. Its function is as follows. Involved in the biosynthesis of branched-chain amino acids (BCAA). Catalyzes an alkyl-migration followed by a ketol-acid reduction of (S)-2-acetolactate (S2AL) to yield (R)-2,3-dihydroxy-isovalerate. In the isomerase reaction, S2AL is rearranged via a Mg-dependent methyl migration to produce 3-hydroxy-3-methyl-2-ketobutyrate (HMKB). In the reductase reaction, this 2-ketoacid undergoes a metal-dependent reduction by NADPH to yield (R)-2,3-dihydroxy-isovalerate. This Jannaschia sp. (strain CCS1) protein is Ketol-acid reductoisomerase (NADP(+)).